The following is a 172-amino-acid chain: 3-hydroxydecanoyl-[acyl-carrier-protein] dehydratase (172 aa).

His-71 is a catalytic residue.

It belongs to the thioester dehydratase family. FabA subfamily. Homodimer.

It localises to the cytoplasm. The enzyme catalyses a (3R)-hydroxyacyl-[ACP] = a (2E)-enoyl-[ACP] + H2O. It carries out the reaction (3R)-hydroxydecanoyl-[ACP] = (2E)-decenoyl-[ACP] + H2O. It catalyses the reaction (2E)-decenoyl-[ACP] = (3Z)-decenoyl-[ACP]. It participates in lipid metabolism; fatty acid biosynthesis. Necessary for the introduction of cis unsaturation into fatty acids. Catalyzes the dehydration of (3R)-3-hydroxydecanoyl-ACP to E-(2)-decenoyl-ACP and then its isomerization to Z-(3)-decenoyl-ACP. Can catalyze the dehydratase reaction for beta-hydroxyacyl-ACPs with saturated chain lengths up to 16:0, being most active on intermediate chain length. In Photorhabdus laumondii subsp. laumondii (strain DSM 15139 / CIP 105565 / TT01) (Photorhabdus luminescens subsp. laumondii), this protein is 3-hydroxydecanoyl-[acyl-carrier-protein] dehydratase.